We begin with the raw amino-acid sequence, 151 residues long: 3-hydroxyacyl-[acyl-carrier-protein] dehydratase FabZ (151 aa).

The active site involves His-56.

It belongs to the thioester dehydratase family. FabZ subfamily.

Its subcellular location is the cytoplasm. The enzyme catalyses a (3R)-hydroxyacyl-[ACP] = a (2E)-enoyl-[ACP] + H2O. Its function is as follows. Involved in unsaturated fatty acids biosynthesis. Catalyzes the dehydration of short chain beta-hydroxyacyl-ACPs and long chain saturated and unsaturated beta-hydroxyacyl-ACPs. The sequence is that of 3-hydroxyacyl-[acyl-carrier-protein] dehydratase FabZ from Nitrobacter hamburgensis (strain DSM 10229 / NCIMB 13809 / X14).